Reading from the N-terminus, the 236-residue chain is Phosphoribosylaminoimidazole-succinocarboxamide synthase (236 aa).

This sequence belongs to the SAICAR synthetase family.

It carries out the reaction 5-amino-1-(5-phospho-D-ribosyl)imidazole-4-carboxylate + L-aspartate + ATP = (2S)-2-[5-amino-1-(5-phospho-beta-D-ribosyl)imidazole-4-carboxamido]succinate + ADP + phosphate + 2 H(+). Its pathway is purine metabolism; IMP biosynthesis via de novo pathway; 5-amino-1-(5-phospho-D-ribosyl)imidazole-4-carboxamide from 5-amino-1-(5-phospho-D-ribosyl)imidazole-4-carboxylate: step 1/2. This is Phosphoribosylaminoimidazole-succinocarboxamide synthase from Cellvibrio japonicus (strain Ueda107) (Pseudomonas fluorescens subsp. cellulosa).